A 96-amino-acid chain; its full sequence is U6 snRNA-associated Sm-like protein LSm8 (96 aa).

Residues 1–76 form the Sm domain; that stretch reads MTSALENYIN…VAVIGEIDEE (76 aa). N-acetylthreonine is present on threonine 2.

This sequence belongs to the snRNP Sm proteins family. In terms of assembly, component of the precatalytic spliceosome (spliceosome B complex). Component of the U4/U6-U5 tri-snRNP complex, a building block of the precatalytic spliceosome (spliceosome B complex). The U4/U6-U5 tri-snRNP complex is composed of the U4, U6 and U5 snRNAs and at least PRPF3, PRPF4, PRPF6, PRPF8, PRPF31, SNRNP200, TXNL4A, SNRNP40, SNRPB, SNRPD1, SNRPD2, SNRPD3, SNRPE, SNRPF, SNRPG, DDX23, CD2BP2, PPIH, SNU13, EFTUD2, SART1 and USP39, plus LSM2, LSM3, LSM4, LSM5, LSM6, LSM7 and LSM8. LSM2, LSM3, LSM4, LSM5, LSM6, LSM7 and LSM8 form a heptameric, ring-shaped subcomplex (the LSM2-8 complex) that is part of the U4/U6-U5 tri-snRNP complex and the precatalytic spliceosome.

Its subcellular location is the nucleus. In terms of biological role, plays a role in pre-mRNA splicing as component of the U4/U6-U5 tri-snRNP complex that is involved in spliceosome assembly, and as component of the precatalytic spliceosome (spliceosome B complex). The heptameric LSM2-8 complex binds specifically to the 3'-terminal U-tract of U6 snRNA. This Bos taurus (Bovine) protein is U6 snRNA-associated Sm-like protein LSm8 (LSM8).